Here is a 352-residue protein sequence, read N- to C-terminus: Dysbindin (352 aa).

S11 carries the phosphoserine modification. Positions 88–176 (EKKRTSLNEL…EAFKAELDTE (89 aa)) form a coiled coil. The tract at residues 173 to 325 (LDTEHTQKAL…DEEEVQVDTA (153 aa)) is dysbindin. Positions 243–256 (LMDISDQEALDVFL) match the Nuclear export signal motif. The tract at residues 267-352 (SPGVEMESNP…SDQCDSTQDI (86 aa)) is disordered. The span at 274–285 (SNPNQNEMSLQI) shows a compositional bias: polar residues. Positions 286–301 (PSPSESASQPPASPSA) are enriched in low complexity. 3 positions are modified to phosphoserine: S315, S340, and S343.

This sequence belongs to the dysbindin family. Interacts with AP3M1 and TRIM32. Interacts (isoform 1 and isoform 2 only) with the DNA-dependent protein kinase complex DNA-PK; the interaction phosphorylates DTNBP1 in vitro. Interacts directly in this complex with XRCC5 and XRCC6. Interacts with XPO1; the interaction exports DTNBP1 out of the nucleus. Component of the biogenesis of lysosome-related organelles complex 1 (BLOC-1) composed of BLOC1S1, BLOC1S2, BLOC1S3, BLOC1S4, BLOC1S5, BLOC1S6, DTNBP1/BLOC1S7 and SNAPIN/BLOC1S8. The BLOC-1 complex associates with the AP-3 protein complex and membrane protein cargos. This BLOC-1 complex also associates with the BLOC-2 complex in endosomes. Binds to DTNA and DTNB but may not be a physiological binding partner. Interacts (via its coiled coil domain) with KXD1. Interacts with AP3B2, BLOC1S5, BLOC1S6, CMYA5, PI4K2, RNF151 and SNAPIN/BLOC1S8. Interacts with XPO1; the interaction exports DTNBP1 out of the nucleus. In terms of processing, ubiquitinated by TRIM32. Ubiquitination leads to DTNBP1 degradation. As to expression, detected in brain, in hippocampus and dentate gyrus neurons. Detected at axon bundles and axon terminals, notably in the cerebellum and hippocampus. Detected in neuropil in hippocampus, lateral septum, basal ganglia and substantia nigra. Highly expressed in pyramidal cells of hippocampus CA2 and CA3. Detected at the heart and skeletal muscle sarcolemma (at protein level). Ubiquitously expressed. The highest expression is observed in testis, liver, kidney, brain, heart and lung. Expressed at lower levels in stomach and small intestine.

The protein localises to the cytoplasm. It is found in the cytoplasmic vesicle membrane. The protein resides in the endosome membrane. It localises to the melanosome membrane. Its subcellular location is the postsynaptic density. The protein localises to the endoplasmic reticulum. It is found in the nucleus. The protein resides in the cytoplasmic vesicle. It localises to the secretory vesicle. Its subcellular location is the synaptic vesicle membrane. The protein localises to the postsynaptic cell membrane. In terms of biological role, component of the BLOC-1 complex, a complex that is required for normal biogenesis of lysosome-related organelles (LRO), such as platelet dense granules and melanosomes. In concert with the AP-3 complex, the BLOC-1 complex is required to target membrane protein cargos into vesicles assembled at cell bodies for delivery into neurites and nerve terminals. The BLOC-1 complex, in association with SNARE proteins, is also proposed to be involved in neurite extension. Associates with the BLOC-2 complex to facilitate the transport of TYRP1 independent of AP-3 function. Plays a role in synaptic vesicle trafficking and in neurotransmitter release. Plays a role in the regulation of cell surface exposure of DRD2. May play a role in actin cytoskeleton reorganization and neurite outgrowth. May modulate MAPK8 phosphorylation. Appears to promote neuronal transmission and viability through regulating the expression of SNAP25 and SYN1, modulating PI3-kinase-Akt signaling and influencing glutamatergic release. Regulates the expression of SYN1 through binding to its promoter. Modulates prefrontal cortical activity via the dopamine/D2 pathway. The protein is Dysbindin (Dtnbp1) of Mus musculus (Mouse).